The primary structure comprises 661 residues: UvrABC system protein B (661 aa).

In terms of domain architecture, Helicase ATP-binding spans 25 to 182 (AGLSSKKRSQ…NDLINLQYER (158 aa)). 38 to 45 (GITGSGKT) lines the ATP pocket. Residues 91-114 (YYDYYQPEAYIARTDTFIEKDSSI) carry the Beta-hairpin motif. In terms of domain architecture, Helicase C-terminal spans 430 to 592 (QIEDLISEIQ…IIPKTINRTI (163 aa)). In terms of domain architecture, UVR spans 621–656 (KTHIDKLKKEMLKAASNLEFEQAAKLRDQLKTLEEA).

This sequence belongs to the UvrB family. As to quaternary structure, forms a heterotetramer with UvrA during the search for lesions. Interacts with UvrC in an incision complex.

Its subcellular location is the cytoplasm. Functionally, the UvrABC repair system catalyzes the recognition and processing of DNA lesions. A damage recognition complex composed of 2 UvrA and 2 UvrB subunits scans DNA for abnormalities. Upon binding of the UvrA(2)B(2) complex to a putative damaged site, the DNA wraps around one UvrB monomer. DNA wrap is dependent on ATP binding by UvrB and probably causes local melting of the DNA helix, facilitating insertion of UvrB beta-hairpin between the DNA strands. Then UvrB probes one DNA strand for the presence of a lesion. If a lesion is found the UvrA subunits dissociate and the UvrB-DNA preincision complex is formed. This complex is subsequently bound by UvrC and the second UvrB is released. If no lesion is found, the DNA wraps around the other UvrB subunit that will check the other stand for damage. In Rickettsia massiliae (strain Mtu5), this protein is UvrABC system protein B.